Here is a 438-residue protein sequence, read N- to C-terminus: GDP-mannose 6-dehydrogenase (438 aa).

Positions 10, 11, 30, 35, 86, and 124 each coordinate NAD(+). Glu-161, Lys-210, Asn-214, His-217, Asn-225, Tyr-256, Tyr-257, Arg-259, Phe-262, and Gly-265 together coordinate GDP-alpha-D-mannuronate. The active site involves Cys-268. Lys-271 is a binding site for NAD(+). A GDP-alpha-D-mannuronate-binding site is contributed by Lys-324. Arg-331 lines the NAD(+) pocket.

This sequence belongs to the UDP-glucose/GDP-mannose dehydrogenase family.

It carries out the reaction GDP-alpha-D-mannose + 2 NAD(+) + H2O = GDP-alpha-D-mannuronate + 2 NADH + 3 H(+). Its pathway is glycan biosynthesis; alginate biosynthesis. Catalyzes the oxidation of guanosine diphospho-D-mannose (GDP-D-mannose) to GDP-D-mannuronic acid, a precursor for alginate polymerization. The alginate layer causes a mucoid phenotype and provides a protective barrier against host immune defenses and antibiotics. This chain is GDP-mannose 6-dehydrogenase (algD), found in Pseudomonas savastanoi pv. phaseolicola (Pseudomonas syringae pv. phaseolicola).